Here is a 285-residue protein sequence, read N- to C-terminus: MPDKPSFQDLILRLHAFWSKAGCVILQPYDVEMGAGTFHPATTLRSLGRKPWRAAYVQPSRRPTDGRYGENPNRLQHYYQYQVIMKPSPETAQSMLLDSYRAIGIDPALHDIRFVEDDWESPTLGAWGLGWEVWCDGMEVGQFTYFQQVGGIPVDLPSFEMTYGLERLAMYVQDVENVYDLDFNGQGVTYGDVFLRAEREYSAHNFEHANTEMLSRHFIDAEKECAALVGQGLALPAYDQCIKASHLFNLLDARGVISVTERAAYIARVRSLAKSCAEAWLAGGG.

It belongs to the class-II aminoacyl-tRNA synthetase family. Tetramer of two alpha and two beta subunits.

It is found in the cytoplasm. It carries out the reaction tRNA(Gly) + glycine + ATP = glycyl-tRNA(Gly) + AMP + diphosphate. This Granulibacter bethesdensis (strain ATCC BAA-1260 / CGDNIH1) protein is Glycine--tRNA ligase alpha subunit.